The chain runs to 76 residues: MSCYSSILNSISTLAFLQVASNVIELVRHCIMHFCETRIRCNTLAFVILKILITMVIYFMIGLGLFYLAKNGTEAE.

The signal sequence occupies residues 1–21 (MSCYSSILNSISTLAFLQVAS). Residues 23–45 (VIELVRHCIMHFCETRIRCNTLA) lie on the Intravirion side of the membrane. The chain crosses the membrane as a helical span at residues 46 to 66 (FVILKILITMVIYFMIGLGLF). The Virion surface segment spans residues 67–76 (YLAKNGTEAE). A glycan (N-linked (GlcNAc...) asparagine; by host) is linked at Asn-71.

The protein belongs to the chordopoxvirinae A9 family.

The protein localises to the virion membrane. It localises to the host cytoplasm. In terms of biological role, envelope protein. Required for an early step in virion morphogenesis. In Fowlpox virus (strain NVSL) (FPV), this protein is Protein A9 homolog.